Reading from the N-terminus, the 382-residue chain is Transforming growth factor beta-1 proprotein (382 aa).

A signal peptide spans 1–21; it reads MEVLWMLLVLLVLHLSSLAMS. The straightjacket domain stretch occupies residues 22–65; the sequence is LSTCKAVDMEEVRKRRIEAIRGQILSKLKLDKTPDVDSEKMTVP. Residues 66–263 form an arm domain region; the sequence is SEAIFLYNST…SMPAERIDTV (198 aa). Asn-73, Asn-123, and Asn-166 each carry an N-linked (GlcNAc...) asparagine glycan. Positions 218–242 are bowtie tail; the sequence is PTPQAKDIDIEGFPALRGDLASLSS. The Cell attachment site motif lies at 234–236; the sequence is RGD. 4 cysteine pairs are disulfide-bonded: Cys-277/Cys-286, Cys-285/Cys-348, Cys-314/Cys-379, and Cys-318/Cys-381.

This sequence belongs to the TGF-beta family. As to quaternary structure, latency-associated peptide: Homodimer; disulfide-linked. Latency-associated peptide: Interacts with Transforming growth factor beta-1 (TGF-beta-1) chain; interaction is non-covalent and maintains (TGF-beta-1) in a latent state; each Latency-associated peptide (LAP) monomer interacts with TGF-beta-1 in the other monomer. Transforming growth factor beta-1: Homodimer; disulfide-linked. Transforming growth factor beta-1: Interacts with TGF-beta receptors (tgfbr1 and tgfbr2), leading to signal transduction. Post-translationally, transforming growth factor beta-1 proprotein: The precursor proprotein is cleaved in the Golgi apparatus to form Transforming growth factor beta-1 (TGF-beta-1) and Latency-associated peptide (LAP) chains, which remain non-covalently linked, rendering TGF-beta-1 inactive.

It localises to the secreted. It is found in the extracellular space. The protein localises to the extracellular matrix. Functionally, transforming growth factor beta-1 proprotein: Precursor of the Latency-associated peptide (LAP) and Transforming growth factor beta-1 (TGF-beta-1) chains, which constitute the regulatory and active subunit of TGF-beta-1, respectively. Required to maintain the Transforming growth factor beta-1 (TGF-beta-1) chain in a latent state during storage in extracellular matrix. Associates non-covalently with TGF-beta-1 and regulates its activation via interaction with 'milieu molecules', such as LTBP1, LRRC32/GARP and LRRC33/NRROS, that control activation of TGF-beta-1. Interaction with integrins (ITGAV:ITGB6 or ITGAV:ITGB8) results in distortion of the Latency-associated peptide chain and subsequent release of the active TGF-beta-1. In terms of biological role, transforming growth factor beta-1: Multifunctional protein that regulates the growth and differentiation of various cell types and is involved in various processes, such as normal development, immune function, microglia function and responses to neurodegeneration. Activation into mature form follows different steps: following cleavage of the proprotein in the Golgi apparatus, Latency-associated peptide (LAP) and Transforming growth factor beta-1 (TGF-beta-1) chains remain non-covalently linked rendering TGF-beta-1 inactive during storage in extracellular matrix. At the same time, LAP chain interacts with 'milieu molecules', such as ltbp1, lrrc32/garp and lrrc33/nrros that control activation of TGF-beta-1 and maintain it in a latent state during storage in extracellular milieus. TGF-beta-1 is released from LAP by integrins (ITGAV:ITGB6 or ITGAV:ITGB8): integrin-binding to LAP stabilizes an alternative conformation of the LAP bowtie tail and results in distortion of the LAP chain and subsequent release of the active TGF-beta-1. Once activated following release of LAP, TGF-beta-1 acts by binding to TGF-beta receptors (tgfbr1 and tgfbr2), which transduce signal. While expressed by many cells types, TGF-beta-1 only has a very localized range of action within cell environment thanks to fine regulation of its activation by Latency-associated peptide chain (LAP) and 'milieu molecules'. Plays an important role in bone remodeling: acts as a potent stimulator of osteoblastic bone formation. Can promote either T-helper 17 cells (Th17) or regulatory T-cells (Treg) lineage differentiation in a concentration-dependent manner. Can induce epithelial-to-mesenchymal transition (EMT) and cell migration in various cell types. This chain is Transforming growth factor beta-1 proprotein (tgfb1), found in Xenopus laevis (African clawed frog).